We begin with the raw amino-acid sequence, 100 residues long: Integration host factor subunit alpha (100 aa).

This sequence belongs to the bacterial histone-like protein family. As to quaternary structure, heterodimer of an alpha and a beta chain.

In terms of biological role, this protein is one of the two subunits of integration host factor, a specific DNA-binding protein that functions in genetic recombination as well as in transcriptional and translational control. This chain is Integration host factor subunit alpha, found in Caulobacter vibrioides (strain ATCC 19089 / CIP 103742 / CB 15) (Caulobacter crescentus).